Reading from the N-terminus, the 619-residue chain is ATP-dependent RNA helicase abstrakt (619 aa).

A compositionally biased stretch (basic residues) spans 1 to 11 (MAHVKRYRRSS). Disordered stretches follow at residues 1–25 (MAHVKRYRRSSKSSEEGDLDNEDYV) and 50–69 (ETAQPKSSSENENEDDSQGA). Phosphoserine occurs at positions 11, 13, 14, 56, 57, 58, and 66. The Q motif signature appears at 177-205 (RSFREMKFPKGILNGLAAKGIKNPTPIQV). A Helicase ATP-binding domain is found at 208 to 392 (LPTVLAGRDL…RSALVKPVTI (185 aa)). 221-228 (AFTGSGKT) is a binding site for ATP. The DEAD box motif lies at 340–343 (DEAD). Residues 403–563 (NVTQQVEYVK…EVPDFLDELA (161 aa)) form the Helicase C-terminal domain. Residues 577–594 (HGCTYCGGLGHRITECPK) form a CCHC-type zinc finger.

Belongs to the DEAD box helicase family. DDX41 subfamily.

Its subcellular location is the nucleus. The catalysed reaction is ATP + H2O = ADP + phosphate + H(+). Functionally, ATP-dependent RNA helicase. Is essential for the directed and fasciculated early outgrowth of the bolwig nerves, as well as for its navigation at later stages. Is required during post-transcriptional gene expression. Plays a role during morphogenetic process, apoptosis and the establishment of cell polarity. The protein is ATP-dependent RNA helicase abstrakt (abs) of Drosophila melanogaster (Fruit fly).